A 382-amino-acid chain; its full sequence is D-galactonate dehydratase (382 aa).

Asp183 contributes to the Mg(2+) binding site. The active-site Proton donor is the His185. Mg(2+) contacts are provided by Glu209 and Glu235. The active-site Proton acceptor is His285.

It belongs to the mandelate racemase/muconate lactonizing enzyme family. GalD subfamily. The cofactor is Mg(2+).

It catalyses the reaction D-galactonate = 2-dehydro-3-deoxy-D-galactonate + H2O. It functions in the pathway carbohydrate acid metabolism; D-galactonate degradation; D-glyceraldehyde 3-phosphate and pyruvate from D-galactonate: step 1/3. Its function is as follows. Catalyzes the dehydration of D-galactonate to 2-keto-3-deoxy-D-galactonate. The polypeptide is D-galactonate dehydratase (Variovorax paradoxus (strain S110)).